Consider the following 235-residue polypeptide: Aspartate/glutamate leucyltransferase (235 aa).

Belongs to the R-transferase family. Bpt subfamily.

It localises to the cytoplasm. It catalyses the reaction N-terminal L-glutamyl-[protein] + L-leucyl-tRNA(Leu) = N-terminal L-leucyl-L-glutamyl-[protein] + tRNA(Leu) + H(+). The enzyme catalyses N-terminal L-aspartyl-[protein] + L-leucyl-tRNA(Leu) = N-terminal L-leucyl-L-aspartyl-[protein] + tRNA(Leu) + H(+). Functionally, functions in the N-end rule pathway of protein degradation where it conjugates Leu from its aminoacyl-tRNA to the N-termini of proteins containing an N-terminal aspartate or glutamate. The polypeptide is Aspartate/glutamate leucyltransferase (Pseudomonas syringae pv. syringae (strain B728a)).